We begin with the raw amino-acid sequence, 244 residues long: Dihydropteridine reductase (244 aa).

N-acetylalanine is present on Ala-2. Position 14 to 38 (14 to 38) interacts with NADP(+); sequence LVYGGRGALGSRCVQAFRARNWWVA. N6-succinyllysine is present on residues Lys-73, Lys-79, Lys-96, and Lys-102. Tyr-150 serves as the catalytic Proton acceptor.

Belongs to the short-chain dehydrogenases/reductases (SDR) family. In terms of assembly, homodimer.

It catalyses the reaction 5,6,7,8-tetrahydropteridine + NAD(+) = 6,7-dihydropteridine + NADH + H(+). The catalysed reaction is 5,6,7,8-tetrahydropteridine + NADP(+) = 6,7-dihydropteridine + NADPH + H(+). In terms of biological role, catalyzes the conversion of quinonoid dihydrobiopterin into tetrahydrobiopterin. This is Dihydropteridine reductase (QDPR) from Homo sapiens (Human).